Consider the following 122-residue polypeptide: Large ribosomal subunit protein bL12 (122 aa).

Belongs to the bacterial ribosomal protein bL12 family. As to quaternary structure, homodimer. Part of the ribosomal stalk of the 50S ribosomal subunit. Forms a multimeric L10(L12)X complex, where L10 forms an elongated spine to which 2 to 4 L12 dimers bind in a sequential fashion. Binds GTP-bound translation factors.

Functionally, forms part of the ribosomal stalk which helps the ribosome interact with GTP-bound translation factors. Is thus essential for accurate translation. This Shewanella loihica (strain ATCC BAA-1088 / PV-4) protein is Large ribosomal subunit protein bL12.